We begin with the raw amino-acid sequence, 318 residues long: Electron transfer flavoprotein subunit alpha (318 aa).

257–285 is a binding site for FAD; it reads LYIALGISGAIQHRAGMQTSKTIVAVNKD.

It belongs to the ETF alpha-subunit/FixB family. As to quaternary structure, heterodimer of an alpha and a beta subunit. The cofactor is FAD.

The electron transfer flavoprotein serves as a specific electron acceptor for other dehydrogenases. It transfers the electrons to the main respiratory chain via ETF-ubiquinone oxidoreductase (ETF dehydrogenase). The chain is Electron transfer flavoprotein subunit alpha (etfA) from Mycobacterium tuberculosis (strain CDC 1551 / Oshkosh).